A 126-amino-acid chain; its full sequence is Fluoride-specific ion channel FluC (126 aa).

Transmembrane regions (helical) follow at residues I5 to W25, W34 to F54, L67 to V87, and F95 to A115. G74 and T77 together coordinate Na(+).

It belongs to the fluoride channel Fluc/FEX (TC 1.A.43) family.

The protein resides in the cell inner membrane. The catalysed reaction is fluoride(in) = fluoride(out). Its activity is regulated as follows. Na(+) is not transported, but it plays an essential structural role and its presence is essential for fluoride channel function. In terms of biological role, fluoride-specific ion channel. Important for reducing fluoride concentration in the cell, thus reducing its toxicity. This Paracidovorax citrulli (strain AAC00-1) (Acidovorax citrulli) protein is Fluoride-specific ion channel FluC.